Here is a 217-residue protein sequence, read N- to C-terminus: Nucleolar protein 12 (217 aa).

Positions Gly-34 to Gln-98 form a coiled coil. The tract at residues Leu-122–Glu-217 is disordered. The span at Gly-130–Ser-141 shows a compositional bias: acidic residues. Composition is skewed to basic residues over residues Ala-172 to Arg-184 and Lys-201 to Glu-217.

The protein belongs to the RRP17 family. As to quaternary structure, interacts with KIAA1191. As to expression, expressed in brain, lung, spleen, kidney and heart.

It localises to the nucleus. The protein localises to the nucleolus. The protein resides in the cytoplasm. Multifunctional RNA binding protein that plays a role in RNA metabolism and DNA maintenance. Participates in the resolution of DNA stress and the maintenance of genome integrity by localizing to sites of DNA insults. Also plays a role in proper nucleolar organization by limiting nucleolar size and regulating nucleolar number. Mechanistically, regulates the nucleolar levels of fibrillarin and nucleolin, two key players in pre-rRNA processing and ribosome assembly. The polypeptide is Nucleolar protein 12 (Nol12) (Mus musculus (Mouse)).